We begin with the raw amino-acid sequence, 217 residues long: Aminopyrimidine aminohydrolase (217 aa).

Substrate is bound at residue aspartate 44. The active-site Nucleophile is cysteine 135. Residues tyrosine 139 and tyrosine 165 each contribute to the substrate site. Glutamate 207 serves as the catalytic Proton donor.

This sequence belongs to the TenA family. In terms of assembly, homotetramer.

The enzyme catalyses 4-amino-5-aminomethyl-2-methylpyrimidine + H2O = 4-amino-5-hydroxymethyl-2-methylpyrimidine + NH4(+). Its pathway is cofactor biosynthesis; thiamine diphosphate biosynthesis. Catalyzes an amino-pyrimidine hydrolysis reaction at the C5' of the pyrimidine moiety of thiamine compounds to give a hydroxymethylpyrimidine (HMP). Displays low activity on 4-amino-5-aminomethyl-2-methylpyrimidine as substrate, indicating that the enzyme may act on a different HMP precursor that may derive from the human stomach food assumption or processing. Is probably involved in thiamine biosynthesis. Does not display thiaminase II activity, as it is unable to hydrolyze thiamine. The chain is Aminopyrimidine aminohydrolase from Helicobacter pylori (Campylobacter pylori).